The following is a 496-amino-acid chain: Lysine--tRNA ligase (496 aa).

Residues Glu408 and Glu415 each contribute to the Mg(2+) site.

The protein belongs to the class-II aminoacyl-tRNA synthetase family. Homodimer. Mg(2+) serves as cofactor.

The protein resides in the cytoplasm. It catalyses the reaction tRNA(Lys) + L-lysine + ATP = L-lysyl-tRNA(Lys) + AMP + diphosphate. This is Lysine--tRNA ligase from Legionella pneumophila (strain Lens).